Here is a 2110-residue protein sequence, read N- to C-terminus: Protein Ycf2 (2110 aa).

An ATP-binding site is contributed by 1336-1343 (GSIGTGRS). The interval 1852 to 1876 (EEEAELQDEEAELQDEGAGRKDEEA) is disordered. Residues 1854 to 1866 (EAELQDEEAELQD) show a composition bias toward acidic residues.

This sequence belongs to the Ycf2 family.

It is found in the plastid. Its subcellular location is the chloroplast stroma. Functionally, probable ATPase of unknown function. Its presence in a non-photosynthetic plant (Epifagus virginiana) and experiments in tobacco indicate that it has an essential function which is probably not related to photosynthesis. The sequence is that of Protein Ycf2 (ycf2-A) from Pelargonium hortorum (Common geranium).